Reading from the N-terminus, the 153-residue chain is Bifunctional protein GAL10 (153 aa).

The segment at M1–E153 is galactowaldenase.

In the N-terminal section; belongs to the NAD(P)-dependent epimerase/dehydratase family. It in the C-terminal section; belongs to the aldose epimerase family. NAD(+) is required as a cofactor.

The enzyme catalyses UDP-alpha-D-glucose = UDP-alpha-D-galactose. The catalysed reaction is alpha-D-glucose = beta-D-glucose. Its pathway is carbohydrate metabolism; galactose metabolism. It functions in the pathway carbohydrate metabolism; hexose metabolism. In terms of biological role, mutarotase converts alpha-aldose to the beta-anomer. It is active on D-glucose, L-arabinose, D-xylose, D-galactose, maltose and lactose. This Candida maltosa (Yeast) protein is Bifunctional protein GAL10 (GAL10).